Here is a 485-residue protein sequence, read N- to C-terminus: Expansin-like protein 8 (485 aa).

The first 21 residues, 1–21, serve as a signal peptide directing secretion; the sequence is MRISIILLSLLFLSLHSLIKA. The Extracellular segment spans residues 22–464; that stretch reads DITKLSVCGS…QSGHHASSNT (443 aa). The Expansin-like EG45 domain maps to 26 to 139; the sequence is LSVCGSARAV…QIVSCGYSGN (114 aa). 2 cysteine pairs are disulfide-bonded: cysteine 29–cysteine 70 and cysteine 73–cysteine 134. Residues asparagine 117 and asparagine 365 are each glycosylated (N-linked (GlcNAc...) asparagine). Residues 408–436 form a disordered region; it reads EVNNKPSTTSGTGTTSSKPSSSSGGVSGG. The span at 414-431 shows a compositional bias: low complexity; the sequence is STTSGTGTTSSKPSSSSG. The N-linked (GlcNAc...) asparagine glycan is linked to asparagine 454. The chain crosses the membrane as a helical span at residues 465 to 485; that stretch reads NILLPTTFVFFISITILSLLF.

Belongs to the expansin family. Expansin A subfamily.

The protein localises to the membrane. Functionally, may serve to lubricate the movement of the cellulose microfibrils during cell growth and wall extension and/or may serve to maintain the fluid state of the slug cell wall. In Dictyostelium discoideum (Social amoeba), this protein is Expansin-like protein 8 (expl8).